Consider the following 283-residue polypeptide: MVSQFLHWYEYNKPVPYRSLLQEKIEPGQTLIVKGSTIDESQRFTINLHSKSADFSGNDVPLHISVRFDEGKVVMNTFANGEWGKEERKSLPIKKGDSFDIRIRAHDDRFQIVIDQKEFKDYEHRLPLTSITHLSIDGDLYLNHVHWGGKYYPVPYESGIASGFPIDKTLLIFGTVEKKAKRFNINLLRRNGDIALHFNPRFDEKAVIRNALAANEWGNEEREGKMPFEKGVGFDLAIKNEAYAFQIFVNGERFTSFAHRQDPNDISGLQIQGDIELTGIQIQ.

Galectin domains are found at residues 17-148 (YRSL…VHWG) and 156-283 (YESG…IQIQ). 217 to 223 (WGNEERE) is a binding site for a beta-D-galactoside.

(Microbial infection) Interacts (via domain galectin 2) with goat TMEM147. Interacts (via domain galectin 1) with goat TMEM63A.

It localises to the membrane. Functionally, binds galactose. Exerts immunomodulatory effects on host peripheral blood mononuclear cells to down-regulate host immune response. Hemagglutinates human, dog, rabbit, chicken and mouse erythrocytes but does not hemagglutinate the erythrocytes of goat, its natural host. The polypeptide is 32 kDa beta-galactoside-binding lectin (GAL-1) (Haemonchus contortus (Barber pole worm)).